Reading from the N-terminus, the 29-residue chain is Cytochrome b6-f complex subunit 8 (29 aa).

The chain crosses the membrane as a helical span at residues 3 to 23; it reads IITFGWVAVAAFFALSIAFVV.

It belongs to the PetN family. In terms of assembly, the 4 large subunits of the cytochrome b6-f complex are cytochrome b6, subunit IV (17 kDa polypeptide, PetD), cytochrome f and the Rieske protein, while the 4 small subunits are PetG, PetL, PetM and PetN. The complex functions as a dimer.

It is found in the cellular thylakoid membrane. Component of the cytochrome b6-f complex, which mediates electron transfer between photosystem II (PSII) and photosystem I (PSI), cyclic electron flow around PSI, and state transitions. This is Cytochrome b6-f complex subunit 8 from Synechococcus sp. (strain JA-3-3Ab) (Cyanobacteria bacterium Yellowstone A-Prime).